Here is a 333-residue protein sequence, read N- to C-terminus: Terminal uridylyltransferase 4 (333 aa).

UTP contacts are provided by residues S54 and S65–D68. Mg(2+) is bound by residues D66 and D68. R121 contacts RNA. Residues G144–S148, K169, K173, and S188–Y189 contribute to the UTP site. The PAP-associated domain maps to L237 to N302.

Belongs to the DNA polymerase type-B-like family. As to quaternary structure, monomer. It depends on Mg(2+) as a cofactor. The cofactor is Mn(2+).

The catalysed reaction is RNA(n) + UTP = RNA(n)-3'-uridine ribonucleotide + diphosphate. The 3' uridylated RNA substrate is involved in the selective incorporation of UTP; UTP binding is favored due to the constraint posed on the positioning of the NTP base by the continuous stacking interactions between Tyr-189 side chain, the bound NTP, and the terminal nucleoside base of the RNA substrate. Functionally, terminal uridylyltransferase which, specifically, catalyzes the addition of Us to the 3'-hydroxyl group of single-stranded RNAs with a 3'-terminal U. The polypeptide is Terminal uridylyltransferase 4 (Trypanosoma brucei brucei (strain 927/4 GUTat10.1)).